The sequence spans 1129 residues: Inositol hexakisphosphate and diphosphoinositol-pentakisphosphate kinase 2 (1129 aa).

Ser-44 is subject to Phosphoserine. 59–60 contributes to the substrate binding site; the sequence is KK. 4 residues coordinate ATP: Arg-140, Lys-193, His-200, and Arg-219. 219–220 is a substrate binding site; sequence RK. Ser-229 is subject to Phosphoserine. Residues 243-246 and 252-254 contribute to the ATP site; these read EEFM and DVK. Lys-254 and Arg-268 together coordinate substrate. ATP contacts are provided by residues Ser-270, Asp-315, and 327-329; that span reads DVN. 332–335 lines the substrate pocket; sequence SFVK. The tract at residues 377-448 is polyphosphoinositide-binding domain; that stretch reads PTTSGTMMEL…VLDIARQLLM (72 aa). Positions 904 to 945 are disordered; the sequence is KGCEEDKNLPSGYGYRPASRENEGRRSLKTDDDEPHTSKRDE. Over residues 921–945 the composition is skewed to basic and acidic residues; it reads ASRENEGRRSLKTDDDEPHTSKRDE. Residues Ser-1051, Ser-1058, and Ser-1066 each carry the phosphoserine modification. Positions 1070–1129 are disordered; that stretch reads YTPTKILPTPPAALKSSKASSKAAAGGPSQAMAPHTSSRKKSINSKTEGHEPKKSTGKKR. Residues 1081–1098 are compositionally biased toward low complexity; that stretch reads AALKSSKASSKAAAGGPS. A phosphoserine mark is found at Ser-1106 and Ser-1107.

It belongs to the histidine acid phosphatase family. VIP1 subfamily. As to expression, ubiquitously expressed. Expressed in the cochlear and vestibular sensory hair cells, supporting cells and spiral ganglion neurons.

The protein localises to the cytoplasm. It is found in the cytosol. The catalysed reaction is 1D-myo-inositol hexakisphosphate + ATP = 1-diphospho-1D-myo-inositol 2,3,4,5,6-pentakisphosphate + ADP. It catalyses the reaction 5-diphospho-1D-myo-inositol 1,2,3,4,6-pentakisphosphate + ATP + H(+) = 1,5-bis(diphospho)-1D-myo-inositol 2,3,4,6-tetrakisphosphate + ADP. Its function is as follows. Bifunctional inositol kinase that acts in concert with the IP6K kinases IP6K1, IP6K2 and IP6K3 to synthesize the diphosphate group-containing inositol pyrophosphates diphosphoinositol pentakisphosphate, PP-InsP5, and bis-diphosphoinositol tetrakisphosphate, (PP)2-InsP4. PP-InsP5 and (PP)2-InsP4, also respectively called InsP7 and InsP8, regulate a variety of cellular processes, including apoptosis, vesicle trafficking, cytoskeletal dynamics, exocytosis, insulin signaling and neutrophil activation. Phosphorylates inositol hexakisphosphate (InsP6) at position 1 to produce PP-InsP5 which is in turn phosphorylated by IP6Ks to produce (PP)2-InsP4. Alternatively, phosphorylates PP-InsP5 at position 1, produced by IP6Ks from InsP6, to produce (PP)2-InsP4. Required for normal hearing. In Mus musculus (Mouse), this protein is Inositol hexakisphosphate and diphosphoinositol-pentakisphosphate kinase 2.